A 208-amino-acid polypeptide reads, in one-letter code: FMN-dependent NADH:quinone oxidoreductase (208 aa).

FMN contacts are provided by residues serine 9, 15 to 17 (SAS), 96 to 99 (MYNF), and 140 to 143 (TRGG).

Belongs to the azoreductase type 1 family. As to quaternary structure, homodimer. It depends on FMN as a cofactor.

The catalysed reaction is 2 a quinone + NADH + H(+) = 2 a 1,4-benzosemiquinone + NAD(+). It carries out the reaction N,N-dimethyl-1,4-phenylenediamine + anthranilate + 2 NAD(+) = 2-(4-dimethylaminophenyl)diazenylbenzoate + 2 NADH + 2 H(+). In terms of biological role, quinone reductase that provides resistance to thiol-specific stress caused by electrophilic quinones. Also exhibits azoreductase activity. Catalyzes the reductive cleavage of the azo bond in aromatic azo compounds to the corresponding amines. In Ralstonia nicotianae (strain ATCC BAA-1114 / GMI1000) (Ralstonia solanacearum), this protein is FMN-dependent NADH:quinone oxidoreductase.